The sequence spans 406 residues: Lysosome-associated membrane glycoprotein 1 (406 aa).

A signal peptide spans 1-24; it reads MAAPGARRPLLLLLLAGLAHGASA. A first lumenal domain region spans residues 25 to 188; that stretch reads LFEVKNNGTT…SKEETHCTQD (164 aa). Residues 25-370 are Lumenal-facing; that stretch reads LFEVKNNGTT…VEECVQDGNN (346 aa). N-linked (GlcNAc...) asparagine glycans are attached at residues asparagine 31, asparagine 52, asparagine 58, asparagine 70, asparagine 78, asparagine 97, asparagine 101, asparagine 115, asparagine 159, and asparagine 177. Residues cysteine 35 and cysteine 74 are joined by a disulfide bond. An intrachain disulfide couples cysteine 149 to cysteine 185. Residues 180–207 form a disordered region; it reads KEETHCTQDGPSPTTGPPSPSPPLVPTN. Positions 189-218 are hinge; that stretch reads GPSPTTGPPSPSPPLVPTNPTVSKYNVTGN. The segment covering 193-205 has biased composition (pro residues); sequence TTGPPSPSPPLVP. Residues asparagine 214, asparagine 219, asparagine 232, and asparagine 240 are each glycosylated (N-linked (GlcNAc...) asparagine). The interval 219–370 is second lumenal domain; that stretch reads NGTCLLASMA…VEECVQDGNN (152 aa). Cysteines 222 and 259 form a disulfide. A glycan (N-linked (GlcNAc...) (high mannose) asparagine) is linked at asparagine 252. N-linked (GlcNAc...) asparagine glycans are attached at residues asparagine 282, asparagine 296, and asparagine 311. The cysteines at positions 327 and 364 are disulfide-linked. Residues 371–394 form a helical membrane-spanning segment; the sequence is MLIPIAVGGALAGLVLIVLIAYLI. The Cytoplasmic segment spans residues 395–406; that stretch reads GRKRSHAGYQTI.

It belongs to the LAMP family. In terms of assembly, interacts with ABCB9; this interaction strongly stabilizes ABCB9 and protects ABCB9 against lysosomal degradation. Interacts with FURIN. Interacts with TMEM175; inhibiting the proton channel activity of TMEM175. In terms of processing, O- and N-glycosylated; some of the N-glycans attached to LAMP-1 are polylactosaminoglycans.

It localises to the lysosome membrane. The protein resides in the endosome membrane. It is found in the late endosome membrane. Its subcellular location is the cell membrane. The protein localises to the cytolytic granule membrane. Functionally, lysosomal membrane glycoprotein which plays an important role in lysosome biogenesis, lysosomal pH regulation, autophagy and cholesterol homeostasis. Acts as an important regulator of lysosomal lumen pH regulation by acting as a direct inhibitor of the proton channel TMEM175, facilitating lysosomal acidification for optimal hydrolase activity. Also plays an important role in NK-cells cytotoxicity. Mechanistically, participates in cytotoxic granule movement to the cell surface and perforin trafficking to the lytic granule. In addition, protects NK-cells from degranulation-associated damage induced by their own cytotoxic granule content. Presents carbohydrate ligands to selectins. Also implicated in tumor cell metastasis. The protein is Lysosome-associated membrane glycoprotein 1 (Lamp1) of Mus musculus (Mouse).